Consider the following 667-residue polypeptide: Cysteine-rich receptor-like protein kinase 11 (667 aa).

The first 24 residues, 1–24 (MKQRSLFSVLCFFFISFGVASVSA), serve as a signal peptide directing secretion. Gnk2-homologous domains lie at 25–129 (QTCT…NTSF) and 135–248 (LNPR…LYTY). Topologically, residues 25–292 (QTCTTDKGTF…SKGISAGVVV (268 aa)) are extracellular. N-linked (GlcNAc...) asparagine glycosylation is found at Asn-37, Asn-54, Asn-64, Asn-106, Asn-126, Asn-150, and Asn-254. The span at 259–268 (SPPPEPPVTV) shows a compositional bias: pro residues. Positions 259–282 (SPPPEPPVTVPQPAGDQDNPTNND) are disordered. An N-linked (GlcNAc...) asparagine glycan is attached at Asn-281. The helical transmembrane segment at 293 to 313 (AITVPTVIAILILLVLGFVLF) threads the bilayer. Topologically, residues 314–667 (RRRKSYQRTK…YTSKSSSFSS (354 aa)) are cytoplasmic. One can recognise a Protein kinase domain in the interval 350–629 (FSTSNKLGEG…IILMLTSNTI (280 aa)). ATP is bound by residues 356–364 (LGEGGFGAV) and Lys-378. Phosphotyrosine is present on Tyr-423. Residue Asp-475 is the Proton acceptor of the active site. At Ser-479 the chain carries Phosphoserine. At Thr-515 the chain carries Phosphothreonine. Phosphotyrosine is present on Tyr-523.

It belongs to the protein kinase superfamily. Ser/Thr protein kinase family. CRK subfamily. In terms of tissue distribution, detected in root, stem, leaf and flower.

It is found in the membrane. The enzyme catalyses L-seryl-[protein] + ATP = O-phospho-L-seryl-[protein] + ADP + H(+). It carries out the reaction L-threonyl-[protein] + ATP = O-phospho-L-threonyl-[protein] + ADP + H(+). This chain is Cysteine-rich receptor-like protein kinase 11 (CRK11), found in Arabidopsis thaliana (Mouse-ear cress).